Reading from the N-terminus, the 254-residue chain is Tubulin-specific chaperone B (254 aa).

In terms of domain architecture, CAP-Gly spans 182 to 225; sequence PLPLDVMGTWCGVEFPEAAGKNDGRINGVTLFGPVAPGHGSFVR. Residues 234-254 form a disordered region; it reads KDEESAEVEDVHDDVESDDEI. Acidic residues predominate over residues 237–254; it reads ESAEVEDVHDDVESDDEI.

Belongs to the TBCB family. Binds to monomeric alpha-tubulin.

The protein resides in the cytoplasm. It localises to the cytoskeleton. In terms of biological role, acts to sequester alpha-tubulin from interaction with beta-tubulin, raising the possibility that it plays a regulatory role in the formation of the tubulin heterodimer. This chain is Tubulin-specific chaperone B (ALF1), found in Saccharomyces cerevisiae (strain ATCC 204508 / S288c) (Baker's yeast).